The primary structure comprises 125 residues: Snaclec botrocetin subunit beta (125 aa).

Disulfide bonds link cysteine 2-cysteine 13, cysteine 30-cysteine 121, and cysteine 98-cysteine 113. The 114-residue stretch at tyrosine 9–glutamate 122 folds into the C-type lectin domain.

Belongs to the snaclec family. As to quaternary structure, heterodimer of subunits alpha and beta; disulfide-linked. Botrocetin and vWF form a soluble complex. Expressed by the venom gland.

The protein localises to the secreted. Snaclec that binds to von Willebrand factor (VWF) and induces its interaction with GPIbalpha (GP1BA) (via the vWF A1 domain), resulting in platelet aggregation. The polypeptide is Snaclec botrocetin subunit beta (Bothrops jararaca (Jararaca)).